Consider the following 167-residue polypeptide: UPF0179 protein Pisl_0688 (167 aa).

It belongs to the UPF0179 family.

The polypeptide is UPF0179 protein Pisl_0688 (Pyrobaculum islandicum (strain DSM 4184 / JCM 9189 / GEO3)).